Consider the following 236-residue polypeptide: Phosphoribosylaminoimidazole-succinocarboxamide synthase (236 aa).

Belongs to the SAICAR synthetase family.

The enzyme catalyses 5-amino-1-(5-phospho-D-ribosyl)imidazole-4-carboxylate + L-aspartate + ATP = (2S)-2-[5-amino-1-(5-phospho-beta-D-ribosyl)imidazole-4-carboxamido]succinate + ADP + phosphate + 2 H(+). The protein operates within purine metabolism; IMP biosynthesis via de novo pathway; 5-amino-1-(5-phospho-D-ribosyl)imidazole-4-carboxamide from 5-amino-1-(5-phospho-D-ribosyl)imidazole-4-carboxylate: step 1/2. This chain is Phosphoribosylaminoimidazole-succinocarboxamide synthase, found in Rickettsia massiliae (strain Mtu5).